We begin with the raw amino-acid sequence, 148 residues long: Putative nickel-responsive regulator (148 aa).

4 residues coordinate Ni(2+): His-88, His-99, His-101, and Cys-107.

Belongs to the transcriptional regulatory CopG/NikR family. It depends on Ni(2+) as a cofactor.

Its function is as follows. Transcriptional regulator. The protein is Putative nickel-responsive regulator of Helicobacter pylori (strain Shi470).